Here is a 327-residue protein sequence, read N- to C-terminus: Cobalamin biosynthesis protein CobD (327 aa).

4 helical membrane passes run 60-80 (GMWL…VLEL), 82-102 (LPFA…VLLA), 159-179 (DGIV…LFAY), and 304-324 (LFWS…LIGL).

It belongs to the CobD/CbiB family.

The protein localises to the cell membrane. It functions in the pathway cofactor biosynthesis; adenosylcobalamin biosynthesis. Functionally, converts cobyric acid to cobinamide by the addition of aminopropanol on the F carboxylic group. This is Cobalamin biosynthesis protein CobD from Brucella anthropi (strain ATCC 49188 / DSM 6882 / CCUG 24695 / JCM 21032 / LMG 3331 / NBRC 15819 / NCTC 12168 / Alc 37) (Ochrobactrum anthropi).